The following is a 106-amino-acid chain: UPF0145 protein APL_0465 (106 aa).

This sequence belongs to the UPF0145 family.

This chain is UPF0145 protein APL_0465, found in Actinobacillus pleuropneumoniae serotype 5b (strain L20).